Here is a 353-residue protein sequence, read N- to C-terminus: 4-hydroxy-3-methylbut-2-en-1-yl diphosphate synthase (flavodoxin) (353 aa).

The [4Fe-4S] cluster site is built by cysteine 263, cysteine 266, cysteine 298, and glutamate 305.

It belongs to the IspG family. Requires [4Fe-4S] cluster as cofactor.

It carries out the reaction (2E)-4-hydroxy-3-methylbut-2-enyl diphosphate + oxidized [flavodoxin] + H2O + 2 H(+) = 2-C-methyl-D-erythritol 2,4-cyclic diphosphate + reduced [flavodoxin]. The protein operates within isoprenoid biosynthesis; isopentenyl diphosphate biosynthesis via DXP pathway; isopentenyl diphosphate from 1-deoxy-D-xylulose 5-phosphate: step 5/6. Converts 2C-methyl-D-erythritol 2,4-cyclodiphosphate (ME-2,4cPP) into 1-hydroxy-2-methyl-2-(E)-butenyl 4-diphosphate. This Geobacter sulfurreducens (strain ATCC 51573 / DSM 12127 / PCA) protein is 4-hydroxy-3-methylbut-2-en-1-yl diphosphate synthase (flavodoxin).